A 199-amino-acid chain; its full sequence is Recombination protein RecR (199 aa).

The segment at 58 to 73 (CRICYNITDTEVCNIC) adopts a C4-type zinc-finger fold. The Toprim domain maps to 81 to 176 (SLICVVSHPM…KVTRIAHGVP (96 aa)).

This sequence belongs to the RecR family.

May play a role in DNA repair. It seems to be involved in an RecBC-independent recombinational process of DNA repair. It may act with RecF and RecO. In Thermoanaerobacter pseudethanolicus (strain ATCC 33223 / 39E) (Clostridium thermohydrosulfuricum), this protein is Recombination protein RecR.